The sequence spans 472 residues: Siroheme synthase (472 aa).

The precorrin-2 dehydrogenase /sirohydrochlorin ferrochelatase stretch occupies residues 1–203; it reads MNYLPIFIDI…GKIQEAKADL (203 aa). NAD(+)-binding positions include 22–23 and 43–44; these read DI and KS. Ser128 carries the post-translational modification Phosphoserine. Positions 216–472 are uroporphyrinogen-III C-methyltransferase; it reads GEVYLVGGGP…SSKKSYLFGG (257 aa). Position 225 (Pro225) interacts with S-adenosyl-L-methionine. The Proton acceptor role is filled by Asp248. Lys270 functions as the Proton donor in the catalytic mechanism. Residues 301-303, Ile306, 331-332, Met383, and Gly412 each bind S-adenosyl-L-methionine; these read GGD and TA.

This sequence in the N-terminal section; belongs to the precorrin-2 dehydrogenase / sirohydrochlorin ferrochelatase family. It in the C-terminal section; belongs to the precorrin methyltransferase family.

The catalysed reaction is uroporphyrinogen III + 2 S-adenosyl-L-methionine = precorrin-2 + 2 S-adenosyl-L-homocysteine + H(+). The enzyme catalyses precorrin-2 + NAD(+) = sirohydrochlorin + NADH + 2 H(+). It catalyses the reaction siroheme + 2 H(+) = sirohydrochlorin + Fe(2+). Its pathway is cofactor biosynthesis; adenosylcobalamin biosynthesis; precorrin-2 from uroporphyrinogen III: step 1/1. The protein operates within cofactor biosynthesis; adenosylcobalamin biosynthesis; sirohydrochlorin from precorrin-2: step 1/1. It functions in the pathway porphyrin-containing compound metabolism; siroheme biosynthesis; precorrin-2 from uroporphyrinogen III: step 1/1. It participates in porphyrin-containing compound metabolism; siroheme biosynthesis; siroheme from sirohydrochlorin: step 1/1. Its pathway is porphyrin-containing compound metabolism; siroheme biosynthesis; sirohydrochlorin from precorrin-2: step 1/1. In terms of biological role, multifunctional enzyme that catalyzes the SAM-dependent methylations of uroporphyrinogen III at position C-2 and C-7 to form precorrin-2 via precorrin-1. Then it catalyzes the NAD-dependent ring dehydrogenation of precorrin-2 to yield sirohydrochlorin. Finally, it catalyzes the ferrochelation of sirohydrochlorin to yield siroheme. The sequence is that of Siroheme synthase from Ruthia magnifica subsp. Calyptogena magnifica.